The following is a 400-amino-acid chain: MGPRSPTAALLVLLCVGCAPTPGRGQYERYSFRSFPRDELMPLESAYRHALDQYSGEHWAESVGYLEVSLRLHRLLRDSEAFCHRNCSAATPAPAPAGPASHAELRLFGSVLRRAQCLKRCKQGLPAFRQSQPSRSVLADFQQREPYKFLQFAYFKANDLPKAIAAAHTYLLKHPDDEMMKRNMEYYKSLPGAEDHIKDLETKSYESLFVRAVRAYNGENWRTSISDMELALPDFLKAFYECLAACEGSREIKDFKDFYLSIADHYVEVLECKIRCEETLTPVIGGYPVEKFVATMYHYLQFAYYKLNDLKNAAPCAVSYLLFDQSDRVMQQNLVYYQYHRDKWGLSDEHFQPRPEAVQFFNVTTLQKELYDFAQEHLMDDDEGEVVEYVDDLLETEESA.

The N-terminal stretch at 1–25 (MGPRSPTAALLVLLCVGCAPTPGRG) is a signal peptide. Asparagine 86 and asparagine 362 each carry an N-linked (GlcNAc...) asparagine glycan.

This sequence belongs to the leprecan family. As to expression, found in articular chondrocytes. Expressed in a variety of tissues.

It is found in the secreted. The protein resides in the extracellular space. Its subcellular location is the extracellular matrix. In terms of biological role, necessary for efficient 3-hydroxylation of fibrillar collagen prolyl residues. In Mus musculus (Mouse), this protein is Cartilage-associated protein (Crtap).